The following is a 203-amino-acid chain: DNA-directed RNA polymerase subunit gamma (203 aa).

The Zn(2+) site is built by cysteine 34, cysteine 36, cysteine 49, and cysteine 52.

Belongs to the RNA polymerase beta' chain family. RpoC1 subfamily. As to quaternary structure, in cyanobacteria the RNAP catalytic core is composed of 2 alpha, 1 beta, 1 beta', 1 gamma and 1 omega subunit. When a sigma factor is associated with the core the holoenzyme is formed, which can initiate transcription. It depends on Zn(2+) as a cofactor.

The catalysed reaction is RNA(n) + a ribonucleoside 5'-triphosphate = RNA(n+1) + diphosphate. DNA-dependent RNA polymerase catalyzes the transcription of DNA into RNA using the four ribonucleoside triphosphates as substrates. In Prochlorothrix hollandica, this protein is DNA-directed RNA polymerase subunit gamma (rpoC1).